The following is a 637-amino-acid chain: Serine/threonine-protein kinase Nek11 (637 aa).

Residues 29 to 287 (YVLQQKLGSG…AIEILKIPYI (259 aa)) enclose the Protein kinase domain. ATP contacts are provided by residues 35 to 43 (LGSGSFGTV) and lysine 61. Residue aspartate 158 is the Proton acceptor of the active site. Residue serine 273 is modified to Phosphoserine; by CHEK1. Residues 302 to 385 (TLEDKNLDCQ…QELRSRNFQQ (84 aa)) are a coiled coil. Residues 399–446 (GMEEKEEQPEGRPSCSPQDEDEERWQDREEEFDEPTLENLSEPQPIPS) are disordered. A compositionally biased stretch (acidic residues) spans 416–434 (QDEDEERWQDREEEFDEPT).

This sequence belongs to the protein kinase superfamily. NEK Ser/Thr protein kinase family. NIMA subfamily. In terms of assembly, interacts with NEK2. The cofactor is Mn(2+). It depends on Mg(2+) as a cofactor. Post-translationally, phosphorylated by NEK2. Phosphorylation at Ser-273 is important for its activation.

The protein localises to the nucleus. It localises to the nucleolus. The enzyme catalyses L-seryl-[protein] + ATP = O-phospho-L-seryl-[protein] + ADP + H(+). It catalyses the reaction L-threonyl-[protein] + ATP = O-phospho-L-threonyl-[protein] + ADP + H(+). With respect to regulation, autorepressed by intramolecular binding of the C-terminus which dissociates following phosphorylation by NEK2. Activated in response to DNA damage. Inhibited by zinc. Functionally, protein kinase which plays an important role in the G2/M checkpoint response to DNA damage. Controls degradation of CDC25A by directly phosphorylating it on residues whose phosphorylation is required for BTRC-mediated polyubiquitination and degradation. This Macaca fascicularis (Crab-eating macaque) protein is Serine/threonine-protein kinase Nek11 (NEK11).